A 297-amino-acid chain; its full sequence is Transmembrane protein 178A (297 aa).

The first 25 residues, M1–A25, serve as a signal peptide directing secretion. Topologically, residues I26 to G179 are extracellular. The segment covering E41–N57 has biased composition (basic and acidic residues). The interval E41–D86 is disordered. The segment covering R68–P79 has biased composition (low complexity). N-linked (GlcNAc...) asparagine glycosylation is present at N158. The chain crosses the membrane as a helical span at residues F180–F200. Residues W201 to H208 are Cytoplasmic-facing. Residues V209–A229 traverse the membrane as a helical segment. Residues A230–S257 are Extracellular-facing. Residues I258 to Y278 form a helical membrane-spanning segment. Topologically, residues P279 to V297 are cytoplasmic.

It belongs to the TMEM178 family. In terms of assembly, interacts with STIM1.

The protein localises to the endoplasmic reticulum membrane. Functionally, acts as a negative regulator of osteoclast differentiation in basal and inflammatory conditions by regulating TNFSF11-induced Ca (2+) fluxes, thereby controlling the induction of NFATC1. This Rattus norvegicus (Rat) protein is Transmembrane protein 178A (Tmem178a).